Reading from the N-terminus, the 512-residue chain is Spastin homolog (512 aa).

The Cytoplasmic portion of the chain corresponds to 1-274; it reads MFAFSKGPAG…FKGLRQPVKG (274 aa). Residues 32–97 adopt a coiled-coil conformation; the sequence is IEMDELTKHA…MKLEKSAQDR (66 aa). Residues 110–182 are disordered; that stretch reads KQSRSATVGP…SDTVHPEPPV (73 aa). Positions 115-233 are MTBD; that stretch reads ATVGPSRPAS…ERLLDEVLDN (119 aa). Positions 137–163 are enriched in basic and acidic residues; the sequence is APEKKNAAKAKENDENRHVCSRGDRCG. The helical intramembrane region spans 275–294; the sequence is ILLFGPPGNGKTLLAKAVAG. 279–286 provides a ligand contact to ATP; the sequence is GPPGNGKT. At 295-512 the chain is on the cytoplasmic side; it reads ESKQMFFNIS…LSDFSRSFGC (218 aa).

Belongs to the AAA ATPase family. Spastin subfamily. In terms of assembly, homohexamer. The homohexamer is stabilized by ATP-binding. The homohexamer may adopt a ring conformation through which microtubules pass prior to being severed. Interacts with microtubules. Interacts (via N-terminus) with tubulin; the interaction is direct.

Its subcellular location is the membrane. It is found in the cytoplasm. It localises to the cytoskeleton. The protein resides in the perinuclear region. It catalyses the reaction n ATP + n H2O + a microtubule = n ADP + n phosphate + (n+1) alpha/beta tubulin heterodimers.. ATP-dependent microtubule severing protein that specifically recognizes and cuts microtubules. Probably by regulating microtubule remodeling, plays a role in new synapse formation in GABAergic DD (Dorsal D type) neurons. This chain is Spastin homolog, found in Caenorhabditis elegans.